Reading from the N-terminus, the 322-residue chain is DNA-directed RNA polymerase subunit alpha (322 aa).

An alpha N-terminal domain (alpha-NTD) region spans residues 1-229 (MNFVNNLFTL…KYFDLIFSFI (229 aa)). The segment at 244 to 322 (NLNLKINSVY…NLNSKIEYDL (79 aa)) is alpha C-terminal domain (alpha-CTD).

Belongs to the RNA polymerase alpha chain family. Homodimer. The RNAP catalytic core consists of 2 alpha, 1 beta, 1 beta' and 1 omega subunit. When a sigma factor is associated with the core the holoenzyme is formed, which can initiate transcription.

It catalyses the reaction RNA(n) + a ribonucleoside 5'-triphosphate = RNA(n+1) + diphosphate. DNA-dependent RNA polymerase catalyzes the transcription of DNA into RNA using the four ribonucleoside triphosphates as substrates. The chain is DNA-directed RNA polymerase subunit alpha (rpoA) from Carsonella ruddii (strain PV).